Here is a 179-residue protein sequence, read N- to C-terminus: Ribosome maturation factor RimM (179 aa).

Positions 102-179 constitute a PRC barrel domain; sequence DGEYYWYQLE…EMKVDWDADF (78 aa).

The protein belongs to the RimM family. Binds ribosomal protein uS19.

Its subcellular location is the cytoplasm. Its function is as follows. An accessory protein needed during the final step in the assembly of 30S ribosomal subunit, possibly for assembly of the head region. Essential for efficient processing of 16S rRNA. May be needed both before and after RbfA during the maturation of 16S rRNA. It has affinity for free ribosomal 30S subunits but not for 70S ribosomes. This is Ribosome maturation factor RimM from Pseudomonas syringae pv. syringae (strain B728a).